A 200-amino-acid chain; its full sequence is Probable GTP-binding protein EngB (200 aa).

Residues 26–200 (SIPEVALAGR…IYEIAQCIKK (175 aa)) form the EngB-type G domain. Residues 34–41 (GRSNVGKS), 61–65 (GCTRQ), 80–83 (DLPG), 147–150 (TKID), and 179–181 (VSS) contribute to the GTP site. Mg(2+)-binding residues include Ser-41 and Thr-63.

Belongs to the TRAFAC class TrmE-Era-EngA-EngB-Septin-like GTPase superfamily. EngB GTPase family. It depends on Mg(2+) as a cofactor.

Functionally, necessary for normal cell division and for the maintenance of normal septation. The protein is Probable GTP-binding protein EngB of Ehrlichia ruminantium (strain Welgevonden).